We begin with the raw amino-acid sequence, 563 residues long: Zinc finger protein 503 (563 aa).

Residues 1-10 (MITSPSASRN) show a composition bias toward polar residues. Disordered regions lie at residues 1 to 48 (MITS…PLRQ) and 101 to 226 (SQIG…TSVS). Low complexity-rich tracts occupy residues 19–33 (SSSSSSRNNSSAVAS) and 112–122 (SKLSSVTSNGS). Over residues 174–194 (ATCQPFTPRTGSPNSSTSASP) the composition is skewed to polar residues. Over residues 199–211 (GKGERDEKKDSDC) the composition is skewed to basic and acidic residues. The segment covering 212 to 226 (NKNCSSDGSAPTSVS) has biased composition (polar residues). The C2H2-type zinc-finger motif lies at 431 to 459 (HVCNWVSANGPCDKRFSSSEELLNHLRTH).

This sequence belongs to the Elbow/Noc family. In terms of assembly, interacts with nlz1.

It is found in the nucleus. Its function is as follows. Required for segmental gene expression during hindbrain development. May function as a transcriptional repressor. The polypeptide is Zinc finger protein 503 (znf503) (Danio rerio (Zebrafish)).